A 271-amino-acid polypeptide reads, in one-letter code: Phosphatidylglycerol--prolipoprotein diacylglyceryl transferase (271 aa).

The next 3 helical transmembrane spans lie at 17 to 37, 63 to 83, and 95 to 115; these read LAIHWYGLTYLAAFGLFFFLA, ILFLGVMGVVIGGRLGYCLFY, and IFAVWQGGMSFHGGMLGVLVS. An a 1,2-diacyl-sn-glycero-3-phospho-(1'-sn-glycerol)-binding site is contributed by arginine 146. 3 consecutive transmembrane segments (helical) span residues 182–202, 209–229, and 243–263; these read SQVYQFLMEGLLLFVLLWLYA, GQVSGAFLVGYGVFRFIAEFF, and MSMGQWLCVPMIAAGIWLWIW.

This sequence belongs to the Lgt family.

The protein localises to the cell inner membrane. The catalysed reaction is L-cysteinyl-[prolipoprotein] + a 1,2-diacyl-sn-glycero-3-phospho-(1'-sn-glycerol) = an S-1,2-diacyl-sn-glyceryl-L-cysteinyl-[prolipoprotein] + sn-glycerol 1-phosphate + H(+). Its pathway is protein modification; lipoprotein biosynthesis (diacylglyceryl transfer). Its function is as follows. Catalyzes the transfer of the diacylglyceryl group from phosphatidylglycerol to the sulfhydryl group of the N-terminal cysteine of a prolipoprotein, the first step in the formation of mature lipoproteins. This is Phosphatidylglycerol--prolipoprotein diacylglyceryl transferase from Polaromonas naphthalenivorans (strain CJ2).